The chain runs to 345 residues: MSAATDIRPLIGLAATRPLTGTEAEAAFGALFEGAATPAQIGGLLMAMRVRGETVEEMAAATRAMRARMNRIKAPEGAMDIVGTGGDGKGTLNISTATAFVVAGAGVPVAKHGNRNLSSKSGSADALTHLGLNVMSTPEIAEAALAATGICFMMAPVHHPAMRHVGPARAELGTRTIFNLLGPMTNPGLVKRQLTGTFDRVWNRPMAETLRELGSECAWLVHGGDGTDEISIAEPTWVAQLKDGEITEFQISPEDAGLPVHPFEAILGGDPARNAAALRALLDGAQGAYRDAVVLNAAAALLIAGQAADLREGAEIARTSIDSGKARAKLAALAAQVGAPADPNG.

5-phospho-alpha-D-ribose 1-diphosphate contacts are provided by residues glycine 83, 86-87, threonine 91, 93-96, 111-119, and serine 123; these read GD, NIST, and KHGNRNLSS. Residue glycine 83 coordinates anthranilate. A Mg(2+)-binding site is contributed by serine 95. Residue asparagine 114 participates in anthranilate binding. Arginine 169 contributes to the anthranilate binding site. Residues aspartate 228 and glutamate 229 each contribute to the Mg(2+) site.

Belongs to the anthranilate phosphoribosyltransferase family. As to quaternary structure, homodimer. Requires Mg(2+) as cofactor.

It carries out the reaction N-(5-phospho-beta-D-ribosyl)anthranilate + diphosphate = 5-phospho-alpha-D-ribose 1-diphosphate + anthranilate. The protein operates within amino-acid biosynthesis; L-tryptophan biosynthesis; L-tryptophan from chorismate: step 2/5. In terms of biological role, catalyzes the transfer of the phosphoribosyl group of 5-phosphorylribose-1-pyrophosphate (PRPP) to anthranilate to yield N-(5'-phosphoribosyl)-anthranilate (PRA). This Paracoccus denitrificans (strain Pd 1222) protein is Anthranilate phosphoribosyltransferase.